The following is a 353-amino-acid chain: Protein Wnt-11b-2 (353 aa).

Positions 1–22 (MALIRHCVTLLLILCCSRLCGA) are cleaved as a signal peptide. N-linked (GlcNAc...) asparagine glycans are attached at residues N31, N38, and N88. 5 disulfides stabilise this stretch: C78-C89, C128-C136, C138-C155, C208-C222, and C210-C217. S214 is lipidated: O-palmitoleoyl serine; by PORCN. Y274 and Y281 each carry sulfotyrosine. Intrachain disulfides connect C282–C313, C298–C308, C312–C352, C328–C343, C330–C340, and C335–C336. A glycan (N-linked (GlcNAc...) asparagine) is linked at N299.

The protein belongs to the Wnt family. As to quaternary structure, homodimer. Secreted homodimers form a complex with wnt5a homodimers; tyrosine sulfation of both wnt11 and wnt5a by tpst1 is required for this interaction. Interacts with the transmembrane receptor fzd7/fz7. Interacts with lrp6 and ryk. Interacts with tdgf1/frl1. Interacts weakly with frzb1 and strongly with frzb2/crescent. Interaction with frzb2/crescent antagonizes wnt11 function in the neuroectoderm, but enhances it in mesodermal tissue. Glycosylation is required for protein secretion. In terms of processing, palmitoleoylation is required for efficient binding to frizzled receptors. Depalmitoleoylation leads to Wnt signaling pathway inhibition.

Its subcellular location is the secreted. It is found in the extracellular space. The protein resides in the extracellular matrix. Functionally, ligand for the frizzled7 transmembrane receptor. Primarily acts via non-canonical Wnt pathways mediated by either Ca(2+) and PKC, or by JNK and dvl2/dsh. Depending on the cellular context, can also signal via the canonical Wnt pathway mediated by beta-catenin and dvl2/dsh. May also inhibit canonical Wnt signaling. Maternally initiates dorsal/ventral axis formation by a canonical route, which signals via lrp6. In a complex with wnt5a, activates the canonical and non-canonical processes involved in axis formation. In the non-canonical pathway, acts through fzd7/fz7 to induce phosphorylation of dvl2/dsh. Signals through a non-canonical Wnt pathway to regulate convergent extension movements during gastrulation. Interactions with the secreted Wnt antagonist sfrp5 to coordinate foregut development, acting via a non-canonical wnt pathway whereby sfrp5 restricts wnt11b activity to prevent inappropriate foregut formation. Mediates cardiogenesis via non-canonical Wnt signaling involving JNK-activation and PKC. Acts redundantly with wnt11/wnt11r during pronephros induction. The chain is Protein Wnt-11b-2 from Xenopus tropicalis (Western clawed frog).